The following is a 285-amino-acid chain: Bifunctional protein FolD (285 aa).

Residues 166-168 (GAS) and isoleucine 232 contribute to the NADP(+) site.

Belongs to the tetrahydrofolate dehydrogenase/cyclohydrolase family. As to quaternary structure, homodimer.

The catalysed reaction is (6R)-5,10-methylene-5,6,7,8-tetrahydrofolate + NADP(+) = (6R)-5,10-methenyltetrahydrofolate + NADPH. It carries out the reaction (6R)-5,10-methenyltetrahydrofolate + H2O = (6R)-10-formyltetrahydrofolate + H(+). Its pathway is one-carbon metabolism; tetrahydrofolate interconversion. Its function is as follows. Catalyzes the oxidation of 5,10-methylenetetrahydrofolate to 5,10-methenyltetrahydrofolate and then the hydrolysis of 5,10-methenyltetrahydrofolate to 10-formyltetrahydrofolate. This is Bifunctional protein FolD from Photobacterium profundum (strain SS9).